The primary structure comprises 252 residues: SPbeta prophage-derived uncharacterized protein YomH (252 aa).

This chain is SPbeta prophage-derived uncharacterized protein YomH (yomH), found in Bacillus subtilis (strain 168).